The chain runs to 728 residues: Myb-related protein A (728 aa).

The interval 1-31 (MAGRARSEDEEEDGQFTEHDYDVSLQKGPKK) is disordered. 3 HTH myb-type domains span residues 30 to 80 (KKPW…HKVL), 81 to 136 (SPEL…NPDV), and 137 to 187 (KKSS…KRKV). 3 consecutive DNA-binding regions (H-T-H motif) follow at residues 57-80 (WGVVARHFINRSEVQCQHRWHKVL), 109-132 (WSIIAKHLKGRIGKQCRERWHNHL), and 160-183 (WAEIAKLLPGRTDNSIKNHWNSTM). A transcriptional activation domain region spans residues 230-293 (IPRYSSLSHD…RKRVPSGSSL (64 aa)). Positions 296 to 534 (SESYHMGESM…IRRSLMAVTP (239 aa)) are negative regulatory domain.

Component of the DREAM complex.

It localises to the nucleus. In terms of biological role, transcription factor that specifically recognizes the sequence 5'-YAAC[GT]G-3'. Acts as a master regulator of male meiosis by promoting expression of piRNAs. The piRNA metabolic process mediates the repression of transposable elements during meiosis by forming complexes composed of piRNAs and Piwi proteins and governs the methylation and subsequent repression of transposons, which is essential for the germline integrity. This is Myb-related protein A (mybl1) from Xenopus laevis (African clawed frog).